Here is a 99-residue protein sequence, read N- to C-terminus: NADH-quinone oxidoreductase subunit K (99 aa).

The next 3 membrane-spanning stretches (helical) occupy residues 3 to 23, 28 to 48, and 59 to 79; these read PENYLYLSALLFTIGAAGVLI, IIVFMCIELMLNASNLAFVTF, and VFAFFTMVVAAAEVVVGLAII.

It belongs to the complex I subunit 4L family. As to quaternary structure, NDH-1 is composed of 14 different subunits. Subunits NuoA, H, J, K, L, M, N constitute the membrane sector of the complex.

Its subcellular location is the cell membrane. The enzyme catalyses a quinone + NADH + 5 H(+)(in) = a quinol + NAD(+) + 4 H(+)(out). In terms of biological role, NDH-1 shuttles electrons from NADH, via FMN and iron-sulfur (Fe-S) centers, to quinones in the respiratory chain. The immediate electron acceptor for the enzyme in this species is believed to be a menaquinone. Couples the redox reaction to proton translocation (for every two electrons transferred, four hydrogen ions are translocated across the cytoplasmic membrane), and thus conserves the redox energy in a proton gradient. This is NADH-quinone oxidoreductase subunit K from Rhodococcus jostii (strain RHA1).